Consider the following 156-residue polypeptide: Transcription elongation factor GreA (156 aa).

Residues 46–67 (AEYHAAREKQSFIEGRIKELEA) are a coiled coil.

This sequence belongs to the GreA/GreB family.

In terms of biological role, necessary for efficient RNA polymerase transcription elongation past template-encoded arresting sites. The arresting sites in DNA have the property of trapping a certain fraction of elongating RNA polymerases that pass through, resulting in locked ternary complexes. Cleavage of the nascent transcript by cleavage factors such as GreA or GreB allows the resumption of elongation from the new 3'terminus. GreA releases sequences of 2 to 3 nucleotides. The chain is Transcription elongation factor GreA from Cereibacter sphaeroides (strain ATCC 17029 / ATH 2.4.9) (Rhodobacter sphaeroides).